A 155-amino-acid polypeptide reads, in one-letter code: Microsomal glutathione S-transferase 1 (155 aa).

Residues 3 to 9 (DLRQLMD) are Lumenal-facing. The helical transmembrane segment at 10–33 (NEVLMAFTSYATIILTKMMFMSSA) threads the bilayer. At 34–62 (TAFQRITNKVFANPEDCAGFGKGENAKKF) the chain is on the cytoplasmic side. Position 38 (arginine 38) interacts with glutathione. N6-acetyllysine occurs at positions 42, 55, and 60. A helical membrane pass occupies residues 63–96 (VRTDEKVERVRRAHLNDLENIVPFLGIGLLYSLS). Residues arginine 73, arginine 74, histidine 76, and glutamate 81 each coordinate glutathione. At 97–99 (GPD) the chain is on the lumenal side. The helical transmembrane segment at 100–123 (LSTALMHFRIFVGARIYHTIAYLT) threads the bilayer. Position 121 (tyrosine 121) interacts with glutathione. Residues 124 to 128 (PLPQP) lie on the Cytoplasmic side of the membrane. Residues 129–148 (NRGLAFFVGYGVTLSMAYRL) form a helical membrane-spanning segment. Residues 149-155 (LRSRLYL) lie on the Lumenal side of the membrane.

The protein belongs to the MAPEG family. As to quaternary structure, homotrimer; The trimer binds only one molecule of glutathione. In terms of processing, acetylation of Lys-42 and Lys-55 is observed in liver mitochondria from fasted mice but not from fed mice. In terms of tissue distribution, expressed in the testes (at protein level).

The protein localises to the endoplasmic reticulum membrane. It is found in the mitochondrion outer membrane. The catalysed reaction is RX + glutathione = an S-substituted glutathione + a halide anion + H(+). Conjugation of reduced glutathione to a wide number of exogenous and endogenous hydrophobic electrophiles. The protein is Microsomal glutathione S-transferase 1 (Mgst1) of Mus musculus (Mouse).